The sequence spans 378 residues: Glutamate 5-kinase (378 aa).

Lys-17 provides a ligand contact to ATP. Ser-58, Asp-145, and Asn-157 together coordinate substrate. ATP contacts are provided by residues 177–178 and 221–227; these read TD and TGGMMTK. The 79-residue stretch at 286-364 folds into the PUA domain; that stretch reads VGKLYLDSGA…KEIPTILGYV (79 aa).

The protein belongs to the glutamate 5-kinase family.

The protein resides in the cytoplasm. It catalyses the reaction L-glutamate + ATP = L-glutamyl 5-phosphate + ADP. The protein operates within amino-acid biosynthesis; L-proline biosynthesis; L-glutamate 5-semialdehyde from L-glutamate: step 1/2. In terms of biological role, catalyzes the transfer of a phosphate group to glutamate to form L-glutamate 5-phosphate. This Nostoc sp. (strain PCC 7120 / SAG 25.82 / UTEX 2576) protein is Glutamate 5-kinase.